The following is a 550-amino-acid chain: Methionine--tRNA ligase (550 aa).

Positions 13–23 (PYANGPLHFGH) match the 'HIGH' region motif. C145, C148, C158, and C161 together coordinate Zn(2+). A 'KMSKS' region motif is present at residues 331–335 (QFSKS). An ATP-binding site is contributed by K334.

The protein belongs to the class-I aminoacyl-tRNA synthetase family. MetG type 1 subfamily. As to quaternary structure, monomer. Zn(2+) is required as a cofactor.

It localises to the cytoplasm. It carries out the reaction tRNA(Met) + L-methionine + ATP = L-methionyl-tRNA(Met) + AMP + diphosphate. Functionally, is required not only for elongation of protein synthesis but also for the initiation of all mRNA translation through initiator tRNA(fMet) aminoacylation. The sequence is that of Methionine--tRNA ligase (metG) from Chlamydia muridarum (strain MoPn / Nigg).